Here is a 147-residue protein sequence, read N- to C-terminus: MYWQNWTHNGRLWGAGVHLYLSRKQCALKNTSLSKFQTSHICKGSALQPQQASPGASSFLTCPELGVMYLKLVLGQMVQAVRRDSGLQPFGSLFLLITQKRAVLTPFLTKTWHSLRALVYRVWSLEESRYLQREKGLVDSFGVLWEE.

This is an uncharacterized protein from Homo sapiens (Human).